Reading from the N-terminus, the 230-residue chain is Orotidine 5'-phosphate decarboxylase (230 aa).

Substrate contacts are provided by residues aspartate 10, lysine 31, 58-67 (DLKLHDIPNT), threonine 117, arginine 179, glutamine 188, glycine 208, and arginine 209. The active-site Proton donor is lysine 60.

Belongs to the OMP decarboxylase family. Type 1 subfamily. As to quaternary structure, homodimer.

It carries out the reaction orotidine 5'-phosphate + H(+) = UMP + CO2. The protein operates within pyrimidine metabolism; UMP biosynthesis via de novo pathway; UMP from orotate: step 2/2. In terms of biological role, catalyzes the decarboxylation of orotidine 5'-monophosphate (OMP) to uridine 5'-monophosphate (UMP). This is Orotidine 5'-phosphate decarboxylase from Staphylococcus epidermidis (strain ATCC 12228 / FDA PCI 1200).